The sequence spans 682 residues: Serine/threonine-protein kinase PLK2 (682 aa).

A disordered region spans residues 25-67 (ACGGDSKKKRPQQPSEDGQSQAQVTPAAPHHHHHHSHSGPEIS). Residues 36 to 48 (QQPSEDGQSQAQV) are compositionally biased toward polar residues. The 253-residue stretch at 79-331 (YCRGKVLGKG…LDDIIRHDFF (253 aa)) folds into the Protein kinase domain. Residues 85–93 (LGKGGFAKC) and Lys108 contribute to the ATP site. The Proton acceptor role is filled by Asp202. Residue Thr236 is modified to Phosphothreonine. A disordered region spans residues 402–430 (TSITQQPSKHRTDEELQPPPTTFAKSGTS). POLO box domains are found at residues 500–578 (WVTK…YMEE) and 598–682 (YLLQ…QRCN).

Belongs to the protein kinase superfamily. Ser/Thr protein kinase family. CDC5/Polo subfamily. As to quaternary structure, interacts with CIB1. Interacts with NSF; causing NSF dissociation from GRIA2. Post-translationally, catalytic activity is enhanced by phosphorylation of Thr-236.

It is found in the cytoplasm. The protein localises to the cytoskeleton. The protein resides in the microtubule organizing center. Its subcellular location is the centrosome. It localises to the centriole. It is found in the cell projection. The protein localises to the dendrite. It catalyses the reaction L-seryl-[protein] + ATP = O-phospho-L-seryl-[protein] + ADP + H(+). The catalysed reaction is L-threonyl-[protein] + ATP = O-phospho-L-threonyl-[protein] + ADP + H(+). Its activity is regulated as follows. Activated by phosphorylation of Thr-236. Once activated, activity is stimulated by binding target proteins. Its function is as follows. Tumor suppressor serine/threonine-protein kinase involved in synaptic plasticity, centriole duplication and G1/S phase transition. Polo-like kinases act by binding and phosphorylating proteins that are already phosphorylated on a specific motif recognized by the POLO box domains. Phosphorylates CPAP, NPM1, RAPGEF2, RASGRF1, SNCA, SIPA1L1 and SYNGAP1. Plays a key role in synaptic plasticity and memory by regulating the Ras and Rap protein signaling: required for overactivity-dependent spine remodeling by phosphorylating the Ras activator RASGRF1 and the Rap inhibitor SIPA1L1 leading to their degradation by the proteasome. Conversely, phosphorylates the Rap activator RAPGEF2 and the Ras inhibitor SYNGAP1, promoting their activity. Also regulates synaptic plasticity independently of kinase activity, via its interaction with NSF that disrupts the interaction between NSF and the GRIA2 subunit of AMPARs, leading to a rapid rundown of AMPAR-mediated current that occludes long term depression. Required for procentriole formation and centriole duplication by phosphorylating CPAP and NPM1, respectively. Its induction by p53/TP53 suggests that it may participate in the mitotic checkpoint following stress. The polypeptide is Serine/threonine-protein kinase PLK2 (Plk2) (Rattus norvegicus (Rat)).